We begin with the raw amino-acid sequence, 101 residues long: uncharacterized protein (101 aa).

Functionally, may regulate the expression of phage structural components with protein P13. This is an uncharacterized protein from Pseudoalteromonas phage PM2 (Bacteriophage PM2).